Reading from the N-terminus, the 197-residue chain is FMN-dependent NADH:quinone oxidoreductase (197 aa).

Residues serine 10, 16–18, and 96–99 contribute to the FMN site; these read SKS and MYNF.

It belongs to the azoreductase type 1 family. As to quaternary structure, homodimer. The cofactor is FMN.

The enzyme catalyses 2 a quinone + NADH + H(+) = 2 a 1,4-benzosemiquinone + NAD(+). It carries out the reaction N,N-dimethyl-1,4-phenylenediamine + anthranilate + 2 NAD(+) = 2-(4-dimethylaminophenyl)diazenylbenzoate + 2 NADH + 2 H(+). Quinone reductase that provides resistance to thiol-specific stress caused by electrophilic quinones. Functionally, also exhibits azoreductase activity. Catalyzes the reductive cleavage of the azo bond in aromatic azo compounds to the corresponding amines. The protein is FMN-dependent NADH:quinone oxidoreductase of Marinomonas sp. (strain MWYL1).